The sequence spans 143 residues: Hemoglobin subunit alpha (143 aa).

Residue S1 is modified to N-acetylserine. Residues 1–143 (SLSATDKARV…LALALSEKYR (143 aa)) enclose the Globin domain. H60 contributes to the O2 binding site. Residue H89 coordinates heme b.

The protein belongs to the globin family. In terms of assembly, heterotetramer of two alpha chains and two beta chains. Red blood cells.

Involved in oxygen transport from gills to the various peripheral tissues. This is Hemoglobin subunit alpha (hba) from Leiostomus xanthurus (Spot).